Here is a 172-residue protein sequence, read N- to C-terminus: Methylated-DNA--protein-cysteine methyltransferase (172 aa).

Residue Cys-142 is the Nucleophile; methyl group acceptor of the active site.

The protein belongs to the MGMT family.

It is found in the cytoplasm. It carries out the reaction a 6-O-methyl-2'-deoxyguanosine in DNA + L-cysteinyl-[protein] = S-methyl-L-cysteinyl-[protein] + a 2'-deoxyguanosine in DNA. It catalyses the reaction a 4-O-methyl-thymidine in DNA + L-cysteinyl-[protein] = a thymidine in DNA + S-methyl-L-cysteinyl-[protein]. Involved in the cellular defense against the biological effects of O6-methylguanine (O6-MeG) and O4-methylthymine (O4-MeT) in DNA. Repairs the methylated nucleobase in DNA by stoichiometrically transferring the methyl group to a cysteine residue in the enzyme. This is a suicide reaction: the enzyme is irreversibly inactivated. The sequence is that of Methylated-DNA--protein-cysteine methyltransferase from Pyrococcus horikoshii (strain ATCC 700860 / DSM 12428 / JCM 9974 / NBRC 100139 / OT-3).